Consider the following 556-residue polypeptide: 2-succinyl-5-enolpyruvyl-6-hydroxy-3-cyclohexene-1-carboxylate synthase (556 aa).

This sequence belongs to the TPP enzyme family. MenD subfamily. In terms of assembly, homodimer. Mg(2+) serves as cofactor. Mn(2+) is required as a cofactor. It depends on thiamine diphosphate as a cofactor.

It catalyses the reaction isochorismate + 2-oxoglutarate + H(+) = 5-enolpyruvoyl-6-hydroxy-2-succinyl-cyclohex-3-ene-1-carboxylate + CO2. Its pathway is quinol/quinone metabolism; 1,4-dihydroxy-2-naphthoate biosynthesis; 1,4-dihydroxy-2-naphthoate from chorismate: step 2/7. It functions in the pathway quinol/quinone metabolism; menaquinone biosynthesis. Its function is as follows. Catalyzes the thiamine diphosphate-dependent decarboxylation of 2-oxoglutarate and the subsequent addition of the resulting succinic semialdehyde-thiamine pyrophosphate anion to isochorismate to yield 2-succinyl-5-enolpyruvyl-6-hydroxy-3-cyclohexene-1-carboxylate (SEPHCHC). This Salmonella choleraesuis (strain SC-B67) protein is 2-succinyl-5-enolpyruvyl-6-hydroxy-3-cyclohexene-1-carboxylate synthase.